A 641-amino-acid polypeptide reads, in one-letter code: DNA mismatch repair protein MutL (641 aa).

The disordered stretch occupies residues 345–445 (PAAVAPPAPA…GDTSLGDTSP (101 aa)). Residues 419-429 (PRTEPATRTGE) are compositionally biased toward basic and acidic residues. Residues 432–442 (GISSGDTSLGD) are compositionally biased toward polar residues.

Belongs to the DNA mismatch repair MutL/HexB family.

Its function is as follows. This protein is involved in the repair of mismatches in DNA. It is required for dam-dependent methyl-directed DNA mismatch repair. May act as a 'molecular matchmaker', a protein that promotes the formation of a stable complex between two or more DNA-binding proteins in an ATP-dependent manner without itself being part of a final effector complex. The polypeptide is DNA mismatch repair protein MutL (Azotobacter vinelandii (strain DJ / ATCC BAA-1303)).